A 69-amino-acid chain; its full sequence is Large ribosomal subunit protein uL29 (69 aa).

It belongs to the universal ribosomal protein uL29 family.

The polypeptide is Large ribosomal subunit protein uL29 (Treponema denticola (strain ATCC 35405 / DSM 14222 / CIP 103919 / JCM 8153 / KCTC 15104)).